The chain runs to 146 residues: Basic phospholipase A2 beta-bungarotoxin A1 chain (146 aa).

An N-terminal signal peptide occupies residues 1–19 (MNPAHLLVLPAVCVSFLGA). The propeptide occupies 20–27 (SIIPPQSL). Cystine bridges form between cysteine 54-cysteine 145, cysteine 56-cysteine 72, cysteine 71-cysteine 126, cysteine 78-cysteine 119, cysteine 87-cysteine 112, and cysteine 105-cysteine 117. Ca(2+)-binding residues include tyrosine 55, glycine 57, and glycine 59. Residue histidine 75 is part of the active site. Aspartate 76 is a binding site for Ca(2+). Aspartate 120 is an active-site residue.

It belongs to the phospholipase A2 family. Group I subfamily. D49 sub-subfamily. Heterodimer with beta-bungarotoxin B chain; disulfide-linked. The A chain has phospholipase A2 activity and the B chain shows homology with the basic protease inhibitors. Ca(2+) is required as a cofactor. As to expression, expressed by the venom gland.

Its subcellular location is the secreted. It carries out the reaction a 1,2-diacyl-sn-glycero-3-phosphocholine + H2O = a 1-acyl-sn-glycero-3-phosphocholine + a fatty acid + H(+). In terms of biological role, snake venom phospholipase A2 (PLA2) that inhibits neuromuscular transmission by blocking acetylcholine release from the nerve termini. PLA2 catalyzes the calcium-dependent hydrolysis of the 2-acyl groups in 3-sn-phosphoglycerides. In Bungarus flaviceps flaviceps (Red-headed krait), this protein is Basic phospholipase A2 beta-bungarotoxin A1 chain.